We begin with the raw amino-acid sequence, 507 residues long: RNA-splicing ligase RtcB homolog (507 aa).

The Mn(2+) site is built by D121, C124, H229, H261, and H355. Residue 228–232 (NHYAE) participates in GMP binding. GMP contacts are provided by residues 355–356 (HN), 404–407 (GGTM), S411, 430–433 (HGAG), and K506. H430 serves as the catalytic GMP-histidine intermediate.

The protein belongs to the RtcB family. Catalytic component of the tRNA-splicing ligase complex. It depends on Mn(2+) as a cofactor.

It catalyses the reaction a 3'-end 3'-phospho-ribonucleotide-RNA + a 5'-end dephospho-ribonucleoside-RNA + GTP = a ribonucleotidyl-ribonucleotide-RNA + GMP + diphosphate. The catalysed reaction is a 3'-end 2',3'-cyclophospho-ribonucleotide-RNA + a 5'-end dephospho-ribonucleoside-RNA + GTP + H2O = a ribonucleotidyl-ribonucleotide-RNA + GMP + diphosphate + H(+). Functionally, catalytic subunit of the tRNA-splicing ligase complex that acts by directly joining spliced tRNA halves to mature-sized tRNAs by incorporating the precursor-derived splice junction phosphate into the mature tRNA as a canonical 3',5'-phosphodiester. May act as an RNA ligase with broad substrate specificity, and may function toward other RNAs. The sequence is that of RNA-splicing ligase RtcB homolog from Plasmodium yoelii yoelii.